Consider the following 114-residue polypeptide: Large ribosomal subunit protein bL17 (114 aa).

Belongs to the bacterial ribosomal protein bL17 family. In terms of assembly, part of the 50S ribosomal subunit. Contacts protein L32.

This is Large ribosomal subunit protein bL17 from Clostridium acetobutylicum (strain ATCC 824 / DSM 792 / JCM 1419 / IAM 19013 / LMG 5710 / NBRC 13948 / NRRL B-527 / VKM B-1787 / 2291 / W).